We begin with the raw amino-acid sequence, 533 residues long: Aspartic proteinase sxa1 (533 aa).

An N-terminal signal peptide occupies residues 1 to 23 (MKASFFVFAISALQALQASVASA). Residues 76-434 (YFANLTLGSN…DWDAQKIGLA (359 aa)) form the Peptidase A1 domain. N-linked (GlcNAc...) asparagine glycosylation is present at Asn-79. Asp-94 is a catalytic residue. Asn-106, Asn-138, Asn-153, Asn-166, Asn-271, Asn-278, Asn-299, and Asn-319 each carry an N-linked (GlcNAc...) asparagine glycan. Residue Asp-325 is part of the active site. Asn-439 carries N-linked (GlcNAc...) asparagine glycosylation.

The protein belongs to the peptidase A1 family.

Involved in degradation or processing of the mating pheromones. Its loss may cause a persistent response to the pheromones. It may cleave the mating pheromone M-factor. May be involved in processing of zymogens that are required for zygote formation. The polypeptide is Aspartic proteinase sxa1 (sxa1) (Schizosaccharomyces pombe (strain 972 / ATCC 24843) (Fission yeast)).